Reading from the N-terminus, the 416-residue chain is Homogentisate 1,2-dioxygenase (416 aa).

Catalysis depends on His275, which acts as the Proton acceptor. 2 residues coordinate Fe cation: His318 and Glu324. Positions 333 and 354 each coordinate homogentisate. His354 contacts Fe cation.

The protein belongs to the homogentisate dioxygenase family. As to quaternary structure, hexamer; dimer of trimers. It depends on Fe cation as a cofactor.

The catalysed reaction is homogentisate + O2 = 4-maleylacetoacetate + H(+). The protein operates within amino-acid degradation; L-phenylalanine degradation; acetoacetate and fumarate from L-phenylalanine: step 4/6. In terms of biological role, involved in the catabolism of homogentisate (2,5-dihydroxyphenylacetate or 2,5-OH-PhAc), a central intermediate in the degradation of phenylalanine and tyrosine. Catalyzes the oxidative ring cleavage of the aromatic ring of homogentisate to yield maleylacetoacetate. In Legionella pneumophila (strain Lens), this protein is Homogentisate 1,2-dioxygenase.